Reading from the N-terminus, the 152-residue chain is Ribonuclease H (152 aa).

In terms of domain architecture, RNase H type-1 spans Ser-4–Ala-145. Positions 13, 51, 73, and 137 each coordinate Mg(2+).

It belongs to the RNase H family. In terms of assembly, monomer. The cofactor is Mg(2+).

Its subcellular location is the cytoplasm. It catalyses the reaction Endonucleolytic cleavage to 5'-phosphomonoester.. Its function is as follows. Endonuclease that specifically degrades the RNA of RNA-DNA hybrids. In Syntrophotalea carbinolica (strain DSM 2380 / NBRC 103641 / GraBd1) (Pelobacter carbinolicus), this protein is Ribonuclease H.